Consider the following 336-residue polypeptide: Monoacylglycerol lipase ABHD6 (336 aa).

The Extracellular segment spans residues 1-8 (MDLDVVNM). A helical; Signal-anchor for type II membrane protein transmembrane segment spans residues 9 to 29 (FVIAGGTLAIPILAFVASFLL). Over 30–336 (WPSALIRIYY…VHNTDNKKLN (307 aa)) the chain is Cytoplasmic. The active-site Nucleophile is Ser-148. Residues Asp-278 and His-306 each act as charge relay system in the active site.

The protein belongs to the AB hydrolase superfamily. As to expression, widely expressed with higher expression in small intestine, liver and brown adipose tissue. In brain, expressed postsynaptically in cortical neurons but not detected in microglia (at protein level).

It localises to the late endosome membrane. It is found in the lysosome membrane. Its subcellular location is the mitochondrion membrane. It catalyses the reaction Hydrolyzes glycerol monoesters of long-chain fatty acids.. It carries out the reaction 2-(5Z,8Z,11Z,14Z-eicosatetraenoyl)-glycerol + H2O = glycerol + (5Z,8Z,11Z,14Z)-eicosatetraenoate + H(+). The enzyme catalyses 1-octanoylglycerol + H2O = octanoate + glycerol + H(+). The catalysed reaction is 1-decanoylglycerol + H2O = decanoate + glycerol + H(+). It catalyses the reaction 1-dodecanoylglycerol + H2O = dodecanoate + glycerol + H(+). It carries out the reaction 1-tetradecanoylglycerol + H2O = tetradecanoate + glycerol + H(+). The enzyme catalyses 2-hexadecanoylglycerol + H2O = glycerol + hexadecanoate + H(+). The catalysed reaction is 2-(9Z-octadecenoyl)-glycerol + H2O = glycerol + (9Z)-octadecenoate + H(+). It catalyses the reaction 1-(9Z-octadecenoyl)-glycerol + H2O = glycerol + (9Z)-octadecenoate + H(+). It carries out the reaction 2-(9Z,12Z-octadecadienoyl)-glycerol + H2O = (9Z,12Z)-octadecadienoate + glycerol + H(+). The enzyme catalyses 1-(5Z,8Z,11Z,14Z-eicosatetraenoyl)-glycerol + H2O = glycerol + (5Z,8Z,11Z,14Z)-eicosatetraenoate + H(+). The catalysed reaction is 1-(9Z,12Z-octadecadienoyl)-glycerol + H2O = (9Z,12Z)-octadecadienoate + glycerol + H(+). It catalyses the reaction 3-(9Z-octadecenoyl)-sn-glycero-1-phospho-(3'-(9Z-octadecenoyl)-1'-sn-glycerol) + H2O = 3-(9Z-octadecenoyl)-sn-glycero-1-phospho-(1'-sn-glycerol) + (9Z)-octadecenoate + H(+). It carries out the reaction (S,S)-2-(9Z-octadecenoyl)-sn-glycero-1-phospho-(2'-(9Z-octadecenoyl)-1'-sn-glycerol) + H2O = (S,S)-2-(9Z-octadecenoyl)-sn-glycero-1-phospho-(1'-sn-glycerol) + (9Z)-octadecenoate + H(+). The enzyme catalyses (R,R)-2-(9Z-octadecenoyl)-sn-glycero-3-phospho-(2'-(9Z-octadecenoyl)-3'-sn-glycerol) + H2O = (R,R)-2-(9Z-octadecenoyl)-sn-glycero-3-phospho-(3'-sn-glycerol) + (9Z)-octadecenoate + H(+). Functionally, lipase that preferentially hydrolysis medium-chain saturated monoacylglycerols including 2-arachidonoylglycerol. Through 2-arachidonoylglycerol degradation may regulate endocannabinoid signaling pathways. Also has a lysophosphatidyl lipase activity with a preference for lysophosphatidylglycerol among other lysophospholipids. Also able to degrade bis(monoacylglycero)phosphate (BMP) and constitutes the major enzyme for BMP catabolism. BMP, also known as lysobisphosphatidic acid, is enriched in late endosomes and lysosomes and plays a key role in the formation of intraluminal vesicles and in lipid sorting. The chain is Monoacylglycerol lipase ABHD6 from Mus musculus (Mouse).